Consider the following 532-residue polypeptide: Flavin-containing monooxygenase 1 (532 aa).

A2 bears the N-acetylalanine mark. Over 2–510 (AKRVAIVGAG…ARVVQESPSP (509 aa)) the chain is Lumenal. FAD-binding positions include 9-13 (GAGVS), E32, 40-41 (LW), and 61-62 (NS). NADP(+) is bound by residues 60-61 (SN) and 195-198 (SGTD). A helical transmembrane segment spans residues 511–531 (FESFLKVFSFLALLVAIFLIF). Residue L532 is a topological domain, cytoplasmic.

Belongs to the FMO family. The cofactor is FAD. In terms of tissue distribution, expressed mainly in fetal and adult liver.

The protein resides in the endoplasmic reticulum membrane. It carries out the reaction hypotaurine + NADPH + O2 + H(+) = taurine + NADP(+) + H2O. The enzyme catalyses hypotaurine + NADH + O2 + H(+) = taurine + NAD(+) + H2O. The catalysed reaction is trimethylamine + NADPH + O2 = trimethylamine N-oxide + NADP(+) + H2O. It catalyses the reaction N,N-dimethylaniline + NADPH + O2 + H(+) = N,N-dimethylaniline N-oxide + NADP(+) + H2O. In terms of biological role, broad spectrum monooxygenase that catalyzes the oxygenation of a wide variety of nitrogen- and sulfur-containing compounds including xenobiotics. Catalyzes the S-oxygenation of hypotaurine to produce taurine, an organic osmolyte involved in cell volume regulation as well as a variety of cytoprotective and developmental processes. In vitro, catalyzes the N-oxygenation of trimethylamine (TMA) to produce trimethylamine N-oxide (TMAO) and could therefore participate to the detoxification of this compound that is generated by the action of gut microbiota from dietary precursors such as choline, choline containing compounds, betaine or L-carnitine. The protein is Flavin-containing monooxygenase 1 of Homo sapiens (Human).